The primary structure comprises 213 residues: High frequency lysogenization protein HflD homolog (213 aa).

Belongs to the HflD family.

Its subcellular location is the cytoplasm. It localises to the cell inner membrane. This chain is High frequency lysogenization protein HflD homolog, found in Nitrosococcus oceani (strain ATCC 19707 / BCRC 17464 / JCM 30415 / NCIMB 11848 / C-107).